An 823-amino-acid chain; its full sequence is DNA topoisomerase 4 subunit A (823 aa).

Positions 30–496 (LPDIRDGLKP…KAIEIDTASL (467 aa)) constitute a Topo IIA-type catalytic domain. The active-site O-(5'-phospho-DNA)-tyrosine intermediate is Y118.

This sequence belongs to the type II topoisomerase GyrA/ParC subunit family. ParC type 2 subfamily. As to quaternary structure, heterotetramer composed of ParC and ParE.

Its subcellular location is the cell membrane. The catalysed reaction is ATP-dependent breakage, passage and rejoining of double-stranded DNA.. Inhibited by quinolones, such as levofloxacin. Its function is as follows. Topoisomerase IV is essential for chromosome segregation. It relaxes supercoiled DNA. Performs the decatenation events required during the replication of a circular DNA molecule. In Streptococcus pneumoniae serotype 4 (strain ATCC BAA-334 / TIGR4), this protein is DNA topoisomerase 4 subunit A.